Reading from the N-terminus, the 711-residue chain is Polyribonucleotide nucleotidyltransferase (711 aa).

An FFRR loop; important for RNA binding region spans residues 77 to 80 (FFRR). The segment at 327 to 331 (LDVRT) is interaction with RNase E. Residues D486 and D492 each coordinate Mg(2+). Residues 553 to 612 (PRIHTIKINPDKIKDVIGKGGSVIRALTEETGTTIEIEDDGTVKIAATDGEKAKHAIRRI) enclose the KH domain. Residues 622–690 (GRVYTGKVTR…RQGRIRLSIK (69 aa)) enclose the S1 motif domain. Residues 689–711 (IKEATEQSQPAAAPEAPAAEQGE) form a disordered region. Positions 694–711 (EQSQPAAAPEAPAAEQGE) are enriched in low complexity.

The protein belongs to the polyribonucleotide nucleotidyltransferase family. Component of the RNA degradosome, which is a multiprotein complex involved in RNA processing and mRNA degradation. Interacts with RNase E (rne). Homotrimer. The homotrimer forms a ring-like structure with a central channel, where RNA molecules can bind. RNA molecules bind between neighboring subunits. Might interact with YicC. It depends on Mg(2+) as a cofactor. Mn(2+) is required as a cofactor.

Its subcellular location is the cytoplasm. The catalysed reaction is RNA(n+1) + phosphate = RNA(n) + a ribonucleoside 5'-diphosphate. In terms of biological role, involved in mRNA degradation. Catalyzes the phosphorolysis of single-stranded polyribonucleotides processively in the 3'- to 5'-direction. Also involved, along with RNase II, in tRNA processing. RNases II and R contribute to rRNA degradation during starvation, while RNase R and PNPase are the major contributors to quality control of rRNA during steady state growth. Contributes to degradation of some small RNAs (sRNA). In Escherichia coli (strain K12), this protein is Polyribonucleotide nucleotidyltransferase.